A 140-amino-acid chain; its full sequence is Coiled-coil domain-containing protein 126 (140 aa).

Residues 1–26 form the signal peptide; that stretch reads MFFTISRKNMSQKLSLLLLVFGLIWG. N-linked (GlcNAc...) asparagine glycosylation is found at Asn-110 and Asn-134. A disordered region spans residues 120 to 140; it reads TSGNLVPVTTNKRTNVSGSIR.

It localises to the secreted. This is Coiled-coil domain-containing protein 126 (CCDC126) from Homo sapiens (Human).